Here is a 161-residue protein sequence, read N- to C-terminus: Cyclic pyranopterin monophosphate synthase (161 aa).

Substrate is bound by residues 75-77 (LCH) and 113-114 (ME). Asp128 is a catalytic residue.

Belongs to the MoaC family. As to quaternary structure, homohexamer; trimer of dimers.

The catalysed reaction is (8S)-3',8-cyclo-7,8-dihydroguanosine 5'-triphosphate = cyclic pyranopterin phosphate + diphosphate. It functions in the pathway cofactor biosynthesis; molybdopterin biosynthesis. Functionally, catalyzes the conversion of (8S)-3',8-cyclo-7,8-dihydroguanosine 5'-triphosphate to cyclic pyranopterin monophosphate (cPMP). The protein is Cyclic pyranopterin monophosphate synthase of Methylobacillus flagellatus (strain ATCC 51484 / DSM 6875 / VKM B-1610 / KT).